A 404-amino-acid polypeptide reads, in one-letter code: ATP phosphoribosyltransferase regulatory subunit (404 aa).

Belongs to the class-II aminoacyl-tRNA synthetase family. HisZ subfamily. In terms of assembly, heteromultimer composed of HisG and HisZ subunits.

Its subcellular location is the cytoplasm. It participates in amino-acid biosynthesis; L-histidine biosynthesis; L-histidine from 5-phospho-alpha-D-ribose 1-diphosphate: step 1/9. Its function is as follows. Required for the first step of histidine biosynthesis. May allow the feedback regulation of ATP phosphoribosyltransferase activity by histidine. The polypeptide is ATP phosphoribosyltransferase regulatory subunit (Trichormus variabilis (strain ATCC 29413 / PCC 7937) (Anabaena variabilis)).